A 378-amino-acid chain; its full sequence is UDP-N-acetylglucosamine--N-acetylmuramyl-(pentapeptide) pyrophosphoryl-undecaprenol N-acetylglucosamine transferase (378 aa).

Residues 24 to 26 (TAG), Asn-144, Arg-181, Ser-215, and Gln-310 each bind UDP-N-acetyl-alpha-D-glucosamine.

This sequence belongs to the glycosyltransferase 28 family. MurG subfamily.

Its subcellular location is the cell membrane. It carries out the reaction di-trans,octa-cis-undecaprenyl diphospho-N-acetyl-alpha-D-muramoyl-L-alanyl-D-glutamyl-meso-2,6-diaminopimeloyl-D-alanyl-D-alanine + UDP-N-acetyl-alpha-D-glucosamine = di-trans,octa-cis-undecaprenyl diphospho-[N-acetyl-alpha-D-glucosaminyl-(1-&gt;4)]-N-acetyl-alpha-D-muramoyl-L-alanyl-D-glutamyl-meso-2,6-diaminopimeloyl-D-alanyl-D-alanine + UDP + H(+). It functions in the pathway cell wall biogenesis; peptidoglycan biosynthesis. Its function is as follows. Cell wall formation. Catalyzes the transfer of a GlcNAc subunit on undecaprenyl-pyrophosphoryl-MurNAc-pentapeptide (lipid intermediate I) to form undecaprenyl-pyrophosphoryl-MurNAc-(pentapeptide)GlcNAc (lipid intermediate II). This Nocardia farcinica (strain IFM 10152) protein is UDP-N-acetylglucosamine--N-acetylmuramyl-(pentapeptide) pyrophosphoryl-undecaprenol N-acetylglucosamine transferase.